A 96-amino-acid chain; its full sequence is Small ribosomal subunit protein uS15 (96 aa).

Belongs to the universal ribosomal protein uS15 family. Part of the 30S ribosomal subunit. Forms a bridge to the 50S subunit in the 70S ribosome, contacting the 23S rRNA.

In terms of biological role, one of the primary rRNA binding proteins, it binds directly to 16S rRNA where it helps nucleate assembly of the platform of the 30S subunit by binding and bridging several RNA helices of the 16S rRNA. Functionally, forms an intersubunit bridge (bridge B4) with the 23S rRNA of the 50S subunit in the ribosome. This Streptomyces griseus subsp. griseus (strain JCM 4626 / CBS 651.72 / NBRC 13350 / KCC S-0626 / ISP 5235) protein is Small ribosomal subunit protein uS15.